Here is a 609-residue protein sequence, read N- to C-terminus: Sulfite reductase [NADPH] flavoprotein alpha-component (609 aa).

A Flavodoxin-like domain is found at 72-210; sequence ITLISASQTG…LAAQWRRQLV (139 aa). FMN contacts are provided by residues 78 to 83 and 125 to 128; these read SQTGNA and STQG. The FAD-binding FR-type domain maps to 244-458; it reads SSPLQATFAV…IEHNDNFRLP (215 aa). Residues Thr332, Gln366, 396 to 399, 414 to 416, Tyr420, and 429 to 432 each bind FAD; these read RLYS, TVG, and GGAS. Residues 529 to 530, 535 to 539, and Asp571 contribute to the NADP(+) site; these read SR and KIYVQ. Tyr609 lines the FAD pocket.

It belongs to the NADPH-dependent sulphite reductase flavoprotein subunit CysJ family. The protein in the N-terminal section; belongs to the flavodoxin family. In the C-terminal section; belongs to the flavoprotein pyridine nucleotide cytochrome reductase family. As to quaternary structure, alpha(8)-beta(8). The alpha component is a flavoprotein, the beta component is a hemoprotein. The cofactor is FAD. FMN serves as cofactor.

It carries out the reaction hydrogen sulfide + 3 NADP(+) + 3 H2O = sulfite + 3 NADPH + 4 H(+). It functions in the pathway sulfur metabolism; hydrogen sulfide biosynthesis; hydrogen sulfide from sulfite (NADPH route): step 1/1. Functionally, component of the sulfite reductase complex that catalyzes the 6-electron reduction of sulfite to sulfide. This is one of several activities required for the biosynthesis of L-cysteine from sulfate. The flavoprotein component catalyzes the electron flow from NADPH -&gt; FAD -&gt; FMN to the hemoprotein component. This chain is Sulfite reductase [NADPH] flavoprotein alpha-component, found in Pectobacterium atrosepticum (strain SCRI 1043 / ATCC BAA-672) (Erwinia carotovora subsp. atroseptica).